A 348-amino-acid chain; its full sequence is UDP-3-O-acylglucosamine N-acyltransferase (348 aa).

His-248 serves as the catalytic Proton acceptor.

It belongs to the transferase hexapeptide repeat family. LpxD subfamily. In terms of assembly, homotrimer.

It catalyses the reaction a UDP-3-O-[(3R)-3-hydroxyacyl]-alpha-D-glucosamine + a (3R)-hydroxyacyl-[ACP] = a UDP-2-N,3-O-bis[(3R)-3-hydroxyacyl]-alpha-D-glucosamine + holo-[ACP] + H(+). It participates in bacterial outer membrane biogenesis; LPS lipid A biosynthesis. Its function is as follows. Catalyzes the N-acylation of UDP-3-O-acylglucosamine using 3-hydroxyacyl-ACP as the acyl donor. Is involved in the biosynthesis of lipid A, a phosphorylated glycolipid that anchors the lipopolysaccharide to the outer membrane of the cell. The protein is UDP-3-O-acylglucosamine N-acyltransferase of Rippkaea orientalis (strain PCC 8801 / RF-1) (Cyanothece sp. (strain PCC 8801)).